A 907-amino-acid chain; its full sequence is MNAPLDGLSVSSSSTGSLGSAAGAGGGGGAGLRLLSANVRQLHQALTALLSEAEREQFTHCLNAYHARRNVFDLVRTLRVLLDSPVKRRLLPMLRLVIPRSDQLLFDQYTAEGLYLPATTPYRQPAWGGPDSAGPGEVRLVSLRRAKAHEGLGFSIRGGSEHGVGIYVSLVEPGSLAEKEGLRVGDQILRVNDKSLARVTHAEAVKALKGSKKLVLSVYSAGRIPGGYVTNHIYTWVDPQGRSISPPSGLPQPHGGALRQQEGDRRSTLHLLQGGDEKKVNLVLGDGRSLGLTIRGGAEYGLGIYITGVDPGSEAEGSGLKVGDQILEVNGRSFLNILHDEAVRLLKSSRHLILTVKDVGRLPHARTTVDETKWIASSRIRETMANSAGFLGDLTTEGINKPGFYKGPAGSQVTLSSLGNQTRVLLEEQARHLLNEQEHATMAYYLDEYRGGSVSVEALVMALFKLLNTHAKFSLLSEVRGTISPQDLERFDHLVLRREIESMKARQPPGPGAGDTYSMVSYSDTGSSTGSHGTSTTVSSARNTLDLEETGEAVQGNINALPDVSVDDVRSTSQGLSSFKPLPRPPPLAQGNDLPLGQPRKLGREDLQPPSSMPSCSGTVFSAPQNRSPPAGTAPTPGTSSAQDLPSSPIYASVSPANPSSKRPLDAHLALVNQHPIGPFPRVQSPPHLKSPSAEATVAGGCLLPPSPSGHPDQTGTNQHFVMVEVHRPDSEPDVNEVRALPQTRTASTLSQLSDSGQTLSEDSGVDAGEAEASAPGRGRQSVSTKSRSSKELPRNERPTDGANKPPGLLEPTSTLVRVKKSAATLGIAIEGGANTRQPLPRIVTIQRGGSAHNCGQLKVGHVILEVNGLTLRGKEHREAARIIAEAFKTKDRDYIDFLVTEFNVML.

One can recognise a PDZ 1 domain in the interval 140-223 (LVSLRRAKAH…LVLSVYSAGR (84 aa)). A disordered region spans residues 243–264 (SISPPSGLPQPHGGALRQQEGD). In terms of domain architecture, PDZ 2 spans 279 to 361 (KVNLVLGDGR…LILTVKDVGR (83 aa)). Disordered stretches follow at residues 502–540 (SMKARQPPGPGAGDTYSMVSYSDTGSSTGSHGTSTTVSS), 565–663 (SVDD…SSKR), 684–717 (QSPPHLKSPSAEATVAGGCLLPPSPSGHPDQTGT), and 742–815 (PQTR…PTST). The segment covering 521–540 (SYSDTGSSTGSHGTSTTVSS) has biased composition (low complexity). A compositionally biased stretch (polar residues) spans 609-626 (PPSSMPSCSGTVFSAPQN). Positions 628–642 (SPPAGTAPTPGTSSA) are enriched in low complexity. Ser-685 carries the post-translational modification Phosphoserine. The span at 743-762 (QTRTASTLSQLSDSGQTLSE) shows a compositional bias: polar residues. Over residues 789–800 (SSKELPRNERPT) the composition is skewed to basic and acidic residues. One can recognise a PDZ 3 domain in the interval 816–899 (LVRVKKSAAT…TKDRDYIDFL (84 aa)).

In terms of assembly, forms homooligomers. Interacts (via C-terminal PDZ domain) with MYO15A; this interaction is necessary for localization of WHRN to stereocilia tips. Interacts (via C-terminal PDZ domain) with MPP1/p55. Interacts with LRRC4C/NGL1. Interacts with MYO7A. Interacts with RPGR. Interacts with EPS8. Interacts with CASK. Interacts with CIB2. Component of USH2 complex, composed of ADGRV1, PDZD7, USH2A and WHRN. Interacts (via PDZ domains) with PDZD7; the interaction is direct. Interacts (via N-terminal PDZ domain) with USH2A (via cytoplasmic region). Interacts with ADGRV1/MASS1 (via cytoplasmic region).

It localises to the cytoplasm. It is found in the cell projection. Its subcellular location is the stereocilium. The protein resides in the growth cone. The protein localises to the photoreceptor inner segment. It localises to the synapse. Involved in hearing and vision as member of the USH2 complex. Necessary for elongation and maintenance of inner and outer hair cell stereocilia in the organ of Corti in the inner ear. Involved in the maintenance of the hair bundle ankle region, which connects stereocilia in cochlear hair cells of the inner ear. In retina photoreceptors, required for the maintenance of periciliary membrane complex that seems to play a role in regulating intracellular protein transport. This Homo sapiens (Human) protein is Whirlin.